A 75-amino-acid polypeptide reads, in one-letter code: Small ribosomal subunit protein bS18 (75 aa).

The protein belongs to the bacterial ribosomal protein bS18 family. Part of the 30S ribosomal subunit. Forms a tight heterodimer with protein bS6.

Its function is as follows. Binds as a heterodimer with protein bS6 to the central domain of the 16S rRNA, where it helps stabilize the platform of the 30S subunit. The sequence is that of Small ribosomal subunit protein bS18 from Shewanella frigidimarina (strain NCIMB 400).